A 705-amino-acid chain; its full sequence is uncharacterized protein (705 aa).

This is an uncharacterized protein from Acanthamoeba polyphaga (Amoeba).